We begin with the raw amino-acid sequence, 98 residues long: Cystatin-B (98 aa).

Residue Met1 is modified to N-acetylmethionine. Residues Gln46–Gly50 carry the Secondary area of contact motif.

It belongs to the cystatin family. In terms of assembly, able to form dimers stabilized by noncovalent forces.

It is found in the cytoplasm. The protein localises to the nucleus. In terms of biological role, this is an intracellular thiol proteinase inhibitor. Tightly binding reversible inhibitor of cathepsins L, H and B. This chain is Cystatin-B (CSTB), found in Pongo pygmaeus (Bornean orangutan).